We begin with the raw amino-acid sequence, 628 residues long: Nucleoside-triphosphatase 2 (628 aa).

A signal peptide spans methionine 1 to glycine 25. Residue glutamate 236 is the Proton acceptor of the active site. N-linked (GlcNAc...) asparagine glycosylation occurs at asparagine 432.

This sequence belongs to the GDA1/CD39 NTPase family. As to quaternary structure, homotetramer.

The protein resides in the secreted. Its subcellular location is the parasitophorous vacuole. The catalysed reaction is a ribonucleoside 5'-triphosphate + H2O = a ribonucleoside 5'-diphosphate + phosphate + H(+). May perform an important processing step in the conversion of high energy nucleotides prior to uptake by the parasite. NTPAse-II has a specific activity 4.5-fold lower than NTPAse-I in hydrolysis of ATP. The primary difference between these isozymes lies in their ability to hydrolyze nucleoside triphosphate versus diphosphate substrates. While NTPAse-II hydrolyzes ATP to ADP and ADP to AMP at almost the same rate, NTPAse-I hydrolyzes ADP to AMP at a much slower rate (0.7% of the rate for ATP). The polypeptide is Nucleoside-triphosphatase 2 (NTP1) (Toxoplasma gondii).